Reading from the N-terminus, the 562-residue chain is MSAILSADDLNDFISPGVACIKPVETLPKNESSNSQNPYEVTTEDKVQPENLPPAQISLTDCLACSGCVTSAEAVLISLQSHAEVLNTLDAYPELPLTQNHNGPYTGSSDALDGESRIFVASVSPQVRASLAATYGISEKEATYMIDQFLSGPHGLRAGGKHGSGFSWVVDTNVMRDAILVLTADEVSETLKEPSARAISKDTLPKRPVLSSACPGWICYAEKTHPFVLPHLSRLKSPQALTGTFLKTVLSKALGVPPSRVWHLAIMPCFDKKLEASREELTDVSWSPLDGGVPLTESNKPVRDVDCVITTRELLTLASSRGISLPTLPLKSLAPSYTPHFPDETLNAFLFRKQNGSEQSMEAGTSGGYLHHVLKTFQAKNPGSEIVTQRGRNADVVEYSLMSPGGEPLMKAARYYGFRNIQNLVRKLKPARVSRLPGARVPAASAGGNRRQPISRNSASAGSGTDYAYVEVMACPGGCTNGGGQIRIEDAREASTSTQSVTAVENPSKPTPHEQRAWLARVDEAYFSAESDAEAKWTVRHSPSPSLRGRLGSMKLSSIGLT.

Residue C20 coordinates [4Fe-4S] cluster. The tract at residues 28 to 47 (PKNESSNSQNPYEVTTEDKV) is disordered. Polar residues predominate over residues 29–40 (KNESSNSQNPYE). C62, C65, C68, C214, and C269 together coordinate [4Fe-4S] cluster. A disordered region spans residues 439–462 (ARVPAASAGGNRRQPISRNSASAG). Residues 452-462 (QPISRNSASAG) show a composition bias toward polar residues. [4Fe-4S] cluster-binding residues include C475 and C479. Disordered stretches follow at residues 492-513 (REASTSTQSVTAVENPSKPTPH) and 541-562 (HSPSPSLRGRLGSMKLSSIGLT). Residues 494–505 (ASTSTQSVTAVE) are compositionally biased toward polar residues.

This sequence belongs to the NARF family.

Its function is as follows. Component of the cytosolic Fe/S protein assembly machinery. Required for maturation of extramitochondrial Fe/S proteins. May play a role in the transfer of pre-assembled Fe/S clusters to target apoproteins. This Aspergillus flavus (strain ATCC 200026 / FGSC A1120 / IAM 13836 / NRRL 3357 / JCM 12722 / SRRC 167) protein is Cytosolic Fe-S cluster assembly factor nar1 (nar1).